Consider the following 859-residue polypeptide: Auxin response factor 2 (859 aa).

The tract at residues 1–48 is disordered; sequence MASSEVSMKGNRGGDNFSSSGFSDPKETRNVSVAGEGQKSNSTRSAAA. A compositionally biased stretch (low complexity) spans 14–23; it reads GDNFSSSGFS. A DNA-binding region (TF-B3) is located at residues 164 to 266; it reads FCKTLTASDT…ELRVGVRRAM (103 aa). A compositionally biased stretch (pro residues) spans 396–407; that stretch reads LAPPALSPVPMP. Disordered regions lie at residues 396 to 442, 687 to 736, and 829 to 859; these read LAPP…LPAS, IASP…RSCT, and RSEE…AGNS. Polar residues-rich tracts occupy residues 416 to 426 and 695 to 704; these read IAPSSPDSSML and LSDQSKGSKS. The region spanning 733 to 817 is the PB1 domain; sequence RSCTKVHKQG…RKIFIYTKEE (85 aa). Polar residues predominate over residues 847–859; it reads SASNPSLSSAGNS.

It belongs to the ARF family. As to quaternary structure, homodimers and heterodimers. Interacts with ARF1. Expressed in the whole plant.

Its subcellular location is the nucleus. Auxin response factors (ARFs) are transcriptional factors that bind specifically to the DNA sequence 5'-TGTCTC-3' found in the auxin-responsive promoter elements (AuxREs). Could act as transcriptional activator or repressor. Formation of heterodimers with Aux/IAA proteins may alter their ability to modulate early auxin response genes expression. Promotes flowering, stamen development, floral organ abscission and fruit dehiscence. Functions independently of ethylene and cytokinin response pathways. May act as a repressor of cell division and organ growth. This is Auxin response factor 2 (ARF2) from Arabidopsis thaliana (Mouse-ear cress).